A 440-amino-acid polypeptide reads, in one-letter code: MPPAPLENSPGASASDTIFALSSGAPPAGVAVVRISGPMAGVAIDRLTGSRPRPAARRASLRALTNPDGGALLDRALLLWLPGPGTATGEDMAELHLHGGRAVTAAVLAALGRLPGLRPATAGEFTRRAFETGRIDLNEAEALADLLAAETEAQRRNAMLLAGGALSRALEDWQHRVLSLAARLEAQLDFSDEEDVAPLDPGFAAELAALDAEVVRWRGRLPVERLRDGVRVVLAGPPNAGKSTLLNALAGREAAIVTPIAGTTRDLIEAPVALGGIPFLLTDTAGLHEGTGDAVEAIGIDRAGQAIAAADIVLWLGDPGCAPAGSVRIGAQADRRTHDSAAHDLLVSARSGTGMDDLVALLLDRAAGLLPGEGEAALSARQRAALDRLGEALALAREEGDPILVAEGLRLARAAIDALTGRAGTEDMLDGLFGRFCIGK.

(6S)-5-formyl-5,6,7,8-tetrahydrofolate is bound by residues Arg-34, Glu-94, and Arg-134. Residues 229-367 enclose the TrmE-type G domain; it reads GVRVVLAGPP…LVALLLDRAA (139 aa). Position 239 (Asn-239) interacts with K(+). GTP contacts are provided by residues 239–244, 258–264, 283–286, and 348–350; these read NAGKST, TPIAGTT, DTAG, and SAR. Ser-243 contributes to the Mg(2+) binding site. Residues Thr-258, Ile-260, and Thr-263 each coordinate K(+). Residue Thr-264 coordinates Mg(2+). Lys-440 contacts (6S)-5-formyl-5,6,7,8-tetrahydrofolate.

The protein belongs to the TRAFAC class TrmE-Era-EngA-EngB-Septin-like GTPase superfamily. TrmE GTPase family. As to quaternary structure, homodimer. Heterotetramer of two MnmE and two MnmG subunits. The cofactor is K(+).

The protein resides in the cytoplasm. Its function is as follows. Exhibits a very high intrinsic GTPase hydrolysis rate. Involved in the addition of a carboxymethylaminomethyl (cmnm) group at the wobble position (U34) of certain tRNAs, forming tRNA-cmnm(5)s(2)U34. In Rhizorhabdus wittichii (strain DSM 6014 / CCUG 31198 / JCM 15750 / NBRC 105917 / EY 4224 / RW1) (Sphingomonas wittichii), this protein is tRNA modification GTPase MnmE.